We begin with the raw amino-acid sequence, 113 residues long: MNTLDFVDQASLRDDIPTFSPGDTVNVHVKVIEGSKERIQVFKGVVIRRQGGGISETFTVRKESYGVGVERTFPVHSPNIDHIDVLTRGDVRRAKLYYLRELRGKKAKIKEKR.

The protein belongs to the bacterial ribosomal protein bL19 family.

This protein is located at the 30S-50S ribosomal subunit interface and may play a role in the structure and function of the aminoacyl-tRNA binding site. In Mycolicibacterium smegmatis (strain ATCC 700084 / mc(2)155) (Mycobacterium smegmatis), this protein is Large ribosomal subunit protein bL19.